A 320-amino-acid polypeptide reads, in one-letter code: Transaldolase (320 aa).

Catalysis depends on Lys-135, which acts as the Schiff-base intermediate with substrate.

The protein belongs to the transaldolase family. Type 1 subfamily. As to quaternary structure, homodimer.

It is found in the cytoplasm. It carries out the reaction D-sedoheptulose 7-phosphate + D-glyceraldehyde 3-phosphate = D-erythrose 4-phosphate + beta-D-fructose 6-phosphate. The protein operates within carbohydrate degradation; pentose phosphate pathway; D-glyceraldehyde 3-phosphate and beta-D-fructose 6-phosphate from D-ribose 5-phosphate and D-xylulose 5-phosphate (non-oxidative stage): step 2/3. Transaldolase is important for the balance of metabolites in the pentose-phosphate pathway. This chain is Transaldolase, found in Colwellia psychrerythraea (strain 34H / ATCC BAA-681) (Vibrio psychroerythus).